Here is a 355-residue protein sequence, read N- to C-terminus: Na(+)/H(+) exchange regulatory cofactor NHE-RF1 (355 aa).

S2 is modified (N-acetylserine). 2 positions are modified to phosphoserine: S2 and S46. The PDZ 1 domain maps to 14-94 (LCCLEKGPNG…AVRLLVVDPE (81 aa)). Composition is skewed to basic and acidic residues over residues 110–119 (LLRPQEKSEQ) and 127–146 (DTHE…RELR). The disordered stretch occupies residues 110-146 (LLRPQEKSEQAEPPAAADTHEAGDQNEAEKSHLRELR). One can recognise a PDZ 2 domain in the interval 149–229 (LCTMKKGPNG…EAKLLVVDKE (81 aa)). A disordered region spans residues 244-355 (EHLDGPLPEP…SKKNELFSNL (112 aa)). A compositionally biased stretch (basic and acidic residues) spans 259-268 (IQKESSREAL). Residues S264, S275, S285, and S286 each carry the phosphoserine modification. Over residues 270–286 (EPASESPRPALARSASS) the composition is skewed to low complexity. Position 288 is a phosphothreonine (T288). Phosphoserine is present on residues S289, S294, and S297. Residues 303–323 (STEPSSTSSSSSDPILDLNIS) are compositionally biased toward low complexity. Residues 345–355 (WSKKNELFSNL) are compositionally biased toward basic and acidic residues.

Homodimer, and heterodimer with NHERF2. Binds the N-termini of EZR, RDX and MSN. Binds the C-termini of PDGFRA, PDGFRB, ADRB2 and NOS2. Binds ARHGAP17, EPI64, RACK1, OPRK1, GNAQ, CTNNB1, PLCB3 and CLCN3. Forms a complex with CFTR and SLC4A7. Forms a complex with SLC4A7 and ATP6V1B1. Binds PDZK1. Binds the C-terminus of PAG1. In resting T-cells, part of a PAG1-NHERF1-MSN complex which is disrupted upon TCR activation. Directly interacts with HTR4. Interacts with MCC. Interacts with TRPC4 (via the PDZ-binding domain). Interacts (via the PDZ 1 domain) with PODXL (via the C-terminal PDZ-binding motif DTHL); interaction is not detected in glomerular epithelium cells. Interacts (via the PDZ 1 domain) with PODXL (via the C-terminal PDZ-binding motif DTHL); the interaction take place early in the secretory pathway and is necessary for its apical membrane sorting. Interacts with SLC34A1. Interacts with CFTR, SLC26A3 and SLC26A6. Interacts (via PDZ domains) with ACE2 (via PDZ-binding motif); the interaction may enhance ACE2 membrane residence. In terms of tissue distribution, expressed in spermatogenic cells.

The protein resides in the cytoplasm. Its subcellular location is the apical cell membrane. It is found in the cell projection. It localises to the filopodium. The protein localises to the ruffle. The protein resides in the microvillus. Its subcellular location is the endomembrane system. Its function is as follows. Scaffold protein that connects plasma membrane proteins with members of the ezrin/moesin/radixin family and thereby helps to link them to the actin cytoskeleton and to regulate their surface expression. Necessary for recycling of internalized ADRB2. Was first known to play a role in the regulation of the activity and subcellular location of SLC9A3. Necessary for cAMP-mediated phosphorylation and inhibition of SLC9A3. May enhance Wnt signaling. May participate in HTR4 targeting to microvilli. Involved in the regulation of phosphate reabsorption in the renal proximal tubules. Involved in sperm capacitation. May participate in the regulation of the chloride and bicarbonate homeostasis in spermatozoa. In Mus musculus (Mouse), this protein is Na(+)/H(+) exchange regulatory cofactor NHE-RF1 (Nherf1).